Consider the following 338-residue polypeptide: Adenylosuccinate synthetase (338 aa).

GTP-binding positions include 12–18 (GDEGKGK) and 42–44 (GHT). Aspartate 13 acts as the Proton acceptor in catalysis. Mg(2+)-binding residues include aspartate 13 and glycine 42. Residues 13 to 16 (DEGK), 40 to 43 (NAGH), threonine 127, arginine 141, glutamine 179, threonine 194, and arginine 256 each bind IMP. Histidine 43 acts as the Proton donor in catalysis. Residue 252–258 (TVTGRRR) coordinates substrate. GTP is bound by residues arginine 258, 284–286 (CLD), and 324–326 (STG).

The protein belongs to the adenylosuccinate synthetase family. As to quaternary structure, homodimer. Mg(2+) serves as cofactor.

The protein localises to the cytoplasm. It catalyses the reaction IMP + L-aspartate + GTP = N(6)-(1,2-dicarboxyethyl)-AMP + GDP + phosphate + 2 H(+). The protein operates within purine metabolism; AMP biosynthesis via de novo pathway; AMP from IMP: step 1/2. Functionally, plays an important role in the de novo pathway of purine nucleotide biosynthesis. Catalyzes the first committed step in the biosynthesis of AMP from IMP. The polypeptide is Adenylosuccinate synthetase (Methanococcus maripaludis (strain DSM 14266 / JCM 13030 / NBRC 101832 / S2 / LL)).